The sequence spans 212 residues: Thymidylate kinase (212 aa).

9 to 16 lines the ATP pocket; the sequence is GIDGCGKT.

The protein belongs to the thymidylate kinase family.

It catalyses the reaction dTMP + ATP = dTDP + ADP. In terms of biological role, phosphorylation of dTMP to form dTDP in both de novo and salvage pathways of dTTP synthesis. The chain is Thymidylate kinase from Synechococcus sp. (strain CC9311).